We begin with the raw amino-acid sequence, 58 residues long: Large ribosomal subunit protein eL24 (58 aa).

Zn(2+) is bound by residues C6, C9, C32, and C36. The C4-type zinc finger occupies 6–36; sequence CSFCGAEIPPGYGIMYVRNDGTIQRYCSRKC.

Belongs to the eukaryotic ribosomal protein eL24 family. In terms of assembly, part of the 50S ribosomal subunit. Forms a cluster with proteins L3 and L14. Requires Zn(2+) as cofactor.

Binds to the 23S rRNA. The protein is Large ribosomal subunit protein eL24 of Pyrobaculum neutrophilum (strain DSM 2338 / JCM 9278 / NBRC 100436 / V24Sta) (Thermoproteus neutrophilus).